The sequence spans 110 residues: Protein OPG154 (110 aa).

Belongs to the orthopoxvirus OPG154 protein family. As to quaternary structure, homohexamers, covalently linked. Interacts with OPG144 and OPG153.

The protein localises to the virion. Functionally, structural protein involved in the envelopment of mature virion (MV) to form the wrapped virion (WV). The wrapping consists of the addition of Golgi membranes to the mature virion. Participates in mature virion (MV) movement within the infected cell. May play an indirect role in MV-cell fusion. This chain is Protein OPG154 (OPG154), found in Homo sapiens (Human).